The following is a 555-amino-acid chain: Developmental regulatory protein wetA (555 aa).

Disordered regions lie at residues 113-171, 250-310, 419-488, and 508-531; these read TGHS…LMRS, QSPA…SESL, TQAV…RGGK, and GVAPSGSSKTKARREQEARDRRRK. Polar residues-rich tracts occupy residues 162–171, 259–281, 293–310, 419–431, and 464–488; these read QSFSPGLMRS, PSANALAGQQQRYLSQTGTSALT, SPHSSDPQSMPSWHSESL, TQAVPHPSRSPSI, and SGQSTSTPKPVKTPNSLSTSPRGGK.

The protein belongs to the wetA family.

BrlA, abaA and wetA are pivotal regulators of conidiophore development and conidium maturation. They act individually and together to regulate their own expression and that of numerous other sporulation-specific genes. Responsible for activating a set of genes whose products make up the final two conidial wall layers or direct their assembly and, through this activity, is responsible for acquisition of spore dormancy. In Emericella nidulans (strain FGSC A4 / ATCC 38163 / CBS 112.46 / NRRL 194 / M139) (Aspergillus nidulans), this protein is Developmental regulatory protein wetA.